The sequence spans 61 residues: Photosystem II reaction center protein K (61 aa).

A propeptide spanning residues 1–24 (MLNIFSLICICLNSVLYSSSFFVA) is cleaved from the precursor. The chain crosses the membrane as a helical span at residues 40 to 60 (MPVIPVLFFLLAFVWQAAVSF).

The protein belongs to the PsbK family. As to quaternary structure, PSII is composed of 1 copy each of membrane proteins PsbA, PsbB, PsbC, PsbD, PsbE, PsbF, PsbH, PsbI, PsbJ, PsbK, PsbL, PsbM, PsbT, PsbX, PsbY, PsbZ, Psb30/Ycf12, at least 3 peripheral proteins of the oxygen-evolving complex and a large number of cofactors. It forms dimeric complexes.

Its subcellular location is the plastid. It is found in the chloroplast thylakoid membrane. In terms of biological role, one of the components of the core complex of photosystem II (PSII). PSII is a light-driven water:plastoquinone oxidoreductase that uses light energy to abstract electrons from H(2)O, generating O(2) and a proton gradient subsequently used for ATP formation. It consists of a core antenna complex that captures photons, and an electron transfer chain that converts photonic excitation into a charge separation. The protein is Photosystem II reaction center protein K of Morus indica (Mulberry).